Reading from the N-terminus, the 344-residue chain is Probable dual-specificity RNA methyltransferase RlmN (344 aa).

E83 serves as the catalytic Proton acceptor. Positions 89–323 (YLDRKTICVS…VSVRRSRGKD (235 aa)) constitute a Radical SAM core domain. A disulfide bridge links C96 with C328. Residues C103, C107, and C110 each contribute to the [4Fe-4S] cluster site. Residues 153–154 (GE), S185, 209–211 (SLH), and N285 contribute to the S-adenosyl-L-methionine site. C328 acts as the S-methylcysteine intermediate in catalysis.

Belongs to the radical SAM superfamily. RlmN family. [4Fe-4S] cluster serves as cofactor.

The protein localises to the cytoplasm. The catalysed reaction is adenosine(2503) in 23S rRNA + 2 reduced [2Fe-2S]-[ferredoxin] + 2 S-adenosyl-L-methionine = 2-methyladenosine(2503) in 23S rRNA + 5'-deoxyadenosine + L-methionine + 2 oxidized [2Fe-2S]-[ferredoxin] + S-adenosyl-L-homocysteine. It catalyses the reaction adenosine(37) in tRNA + 2 reduced [2Fe-2S]-[ferredoxin] + 2 S-adenosyl-L-methionine = 2-methyladenosine(37) in tRNA + 5'-deoxyadenosine + L-methionine + 2 oxidized [2Fe-2S]-[ferredoxin] + S-adenosyl-L-homocysteine. Specifically methylates position 2 of adenine 2503 in 23S rRNA and position 2 of adenine 37 in tRNAs. This is Probable dual-specificity RNA methyltransferase RlmN from Deinococcus geothermalis (strain DSM 11300 / CIP 105573 / AG-3a).